An 863-amino-acid polypeptide reads, in one-letter code: Dipeptidyl peptidase 9 (863 aa).

Residues 1–20 are disordered; the sequence is MATTGTPTADRGDAAATDDP. N-acetylalanine is present on Ala2. Catalysis depends on charge relay system residues Ser730, Asp808, and His840. Residue Ser730 participates in Val-boroPro binding.

Belongs to the peptidase S9B family. DPPIV subfamily. As to quaternary structure, homodimer. Forms a ternary complex with NLRP1, composed of a DPP9 homodimer, one full-length NLRP1 protein, and one cleaved C-terminus of NLRP1 (NACHT, LRR and PYD domains-containing protein 1, C-terminus). Forms a ternary complex with CARD8, composed of a DPP9 homodimer, one full-length NLRP1 protein, and one cleaved C-terminus of CARD8 (Caspase recruitment domain-containing protein 8, C-terminus). In the ternary complex, only one subunit of the DPP9 homodimer is bound to NLRP1 or CARD8. In terms of tissue distribution, ubiquitously expressed, with highest levels in liver, heart and muscle, and lowest levels in brain.

It is found in the cytoplasm. It localises to the cytosol. Its subcellular location is the nucleus. The catalysed reaction is Release of an N-terminal dipeptide, Xaa-Yaa-|-Zaa-, from a polypeptide, preferentially when Yaa is Pro, provided Zaa is neither Pro nor hydroxyproline.. Inhibited by the serine proteinase inhibitor 4-(2-aminoethyl)benzenesulphonyl fluoride (AEBSF), and by di-isopropylfluorophosphate. Inhibited by Val-boroPro (Talabostat, PT-100), a non-selective inhibitor, which triggers pyroptosis in monocytes and macrophages. Val-boroPro inhibits activity by binding to the active site, mimicking a substrate-bound state, thereby displacing the C-terminal fragment of NLRP1, leading to activation of the NLRP1 inflammasome. In contrast, Val-boroPro does not directly displaces CARD8: it acts by promoting degradation of the N-terminal part of CARD8, leading to indirect disruption of the ternary complex. Chemical inhibition of DPP9 by Val-boroPro in HIV-1-infected cells activates the CARD8 inflammasome, triggering cell death, offering a promising strategy for the elimination of HIV-1 reservoirs in people living with HIV-1. Its function is as follows. Dipeptidyl peptidase that cleaves off N-terminal dipeptides from proteins having a Pro or Ala residue at position 2. Acts as a key inhibitor of caspase-1-dependent monocyte and macrophage pyroptosis in resting cells by preventing activation of NLRP1 and CARD8. Sequesters the cleaved C-terminal part of NLRP1 and CARD8, which respectively constitute the active part of the NLRP1 and CARD8 inflammasomes, in a ternary complex, thereby preventing their oligomerization and activation. The dipeptidyl peptidase activity is required to suppress NLRP1 and CARD8; however, neither NLRP1 nor CARD8 are bona fide substrates of DPP9, suggesting the existence of substrate(s) required for NLRP1 and CARD8 inhibition. The protein is Dipeptidyl peptidase 9 of Homo sapiens (Human).